We begin with the raw amino-acid sequence, 225 residues long: NAD(P)H-quinone oxidoreductase subunit K, chloroplastic (225 aa).

[4Fe-4S] cluster contacts are provided by Cys43, Cys44, Cys108, and Cys139.

It belongs to the complex I 20 kDa subunit family. As to quaternary structure, NDH is composed of at least 16 different subunits, 5 of which are encoded in the nucleus. The cofactor is [4Fe-4S] cluster.

Its subcellular location is the plastid. The protein resides in the chloroplast thylakoid membrane. It catalyses the reaction a plastoquinone + NADH + (n+1) H(+)(in) = a plastoquinol + NAD(+) + n H(+)(out). The catalysed reaction is a plastoquinone + NADPH + (n+1) H(+)(in) = a plastoquinol + NADP(+) + n H(+)(out). Functionally, NDH shuttles electrons from NAD(P)H:plastoquinone, via FMN and iron-sulfur (Fe-S) centers, to quinones in the photosynthetic chain and possibly in a chloroplast respiratory chain. The immediate electron acceptor for the enzyme in this species is believed to be plastoquinone. Couples the redox reaction to proton translocation, and thus conserves the redox energy in a proton gradient. This Guizotia abyssinica (Niger) protein is NAD(P)H-quinone oxidoreductase subunit K, chloroplastic.